The sequence spans 194 residues: Holliday junction branch migration complex subunit RuvA (194 aa).

Residues methionine 1–leucine 64 are domain I. Positions serine 65–serine 140 are domain II. Positions serine 140–lysine 144 are flexible linker. The tract at residues leucine 145–cysteine 194 is domain III.

Belongs to the RuvA family. Homotetramer. Forms an RuvA(8)-RuvB(12)-Holliday junction (HJ) complex. HJ DNA is sandwiched between 2 RuvA tetramers; dsDNA enters through RuvA and exits via RuvB. An RuvB hexamer assembles on each DNA strand where it exits the tetramer. Each RuvB hexamer is contacted by two RuvA subunits (via domain III) on 2 adjacent RuvB subunits; this complex drives branch migration. In the full resolvosome a probable DNA-RuvA(4)-RuvB(12)-RuvC(2) complex forms which resolves the HJ.

The protein localises to the cytoplasm. Its function is as follows. The RuvA-RuvB-RuvC complex processes Holliday junction (HJ) DNA during genetic recombination and DNA repair, while the RuvA-RuvB complex plays an important role in the rescue of blocked DNA replication forks via replication fork reversal (RFR). RuvA specifically binds to HJ cruciform DNA, conferring on it an open structure. The RuvB hexamer acts as an ATP-dependent pump, pulling dsDNA into and through the RuvAB complex. HJ branch migration allows RuvC to scan DNA until it finds its consensus sequence, where it cleaves and resolves the cruciform DNA. The sequence is that of Holliday junction branch migration complex subunit RuvA from Xylella fastidiosa (strain M12).